We begin with the raw amino-acid sequence, 559 residues long: Vacuolar protein 8 (559 aa).

Residue G2 is the site of N-myristoyl glycine attachment. C4 is lipidated: S-palmitoyl cysteine. ARM repeat units lie at residues 77 to 116 (TERD…NLAV), 118 to 157 (TENK…NLAT), 159 to 198 (EENK…NMTH), 200 to 239 (DENR…NIAV), 243 to 282 (NRRK…NLAS), 284 to 323 (EKYQ…NISI), 325 to 365 (PMNE…NLAA), and 409 to 448 (DDLK…NLSS).

Belongs to the beta-catenin family.

The protein resides in the vacuole membrane. Functionally, functions in both vacuole inheritance and protein targeting from the cytoplasm to vacuole. This Gibberella zeae (strain ATCC MYA-4620 / CBS 123657 / FGSC 9075 / NRRL 31084 / PH-1) (Wheat head blight fungus) protein is Vacuolar protein 8 (VAC8).